The primary structure comprises 714 residues: MEASCILPVLKKKLAFLSGGKDRRSGLILTIPLCTEQTSMEELSTTLDYLLGIPSEKCKARGFTVIVDGRKSQWNIVKTVVLMLQNVIPAEVSLVCVVKPDEFWDKKVTHFCFWKEKDRLGFEVILVSANKLTRYIEPCQLTDEFGGSLLYDHLDWVNKRLVFEKFTKESTSLLDELIVINENEKGSQAEKDRSSESNILPSFDPETVLQTGHELLSELQQRRFNGSEGGGGGGTAWSPMDDELLAQPQVMKLLDSLREQYTKYQEVCRQRSKRSQLEEIQTKVMQVVNWLEGPGTDQLRTQWGIGDSIRASQALQQKHEEIESQHSEWFAVYVELNQQIAALLSAGDEEDLMELKGLQQQLSDVCYRQASQLEFRQNVLQSAYEFHMTAQDLSQQLDGLLGMLCADVAPADGAAIQQTLKHLEEKLKSVESALQTLREKGQALLDQMSNQTSFSYGKEVGVENKENIDHIHSVMEDMQLRKQRCEDMVDVRRLKMLQMVQLFKCEEDASQAVEWLGELLDALLKTHIRLGDDSQETKVLLEKHKKFVDVAQSTYDYGRQLLQATVVLCQSLRCTTRSSGDTLPRLNRVWKQFTVTSDERQHRLEMASAFHTAAEKIVRESPELAELLVDVEAYEEVETLGKGLLDRLTVPVIFPDGSEQFFGSPGDMASSAESIRERMKLVEEKRFLQEEAEQRLEEEEEEEEAALEVEPRES.

The CRAL-TRIO domain maps to 1 to 153; sequence MEASCILPVL…EFGGSLLYDH (153 aa). Spectrin repeat units follow at residues 275-381, 384-497, and 503-605; these read SQLE…NVLQ, YEFH…LKML, and FKCE…HRLE. A disordered region spans residues 691–714; sequence EAEQRLEEEEEEEEAALEVEPRES. Residues 696 to 707 are compositionally biased toward acidic residues; the sequence is LEEEEEEEEAAL.

It belongs to the SOLO family.

Functionally, may act as the primary docking protein directing membrane turnover and assembly of the transient receptor potential channels trpc4 and trpc5. Binds phospholipids. This chain is SEC14 domain and spectrin repeat-containing protein 1 (sestd1), found in Danio rerio (Zebrafish).